A 288-amino-acid polypeptide reads, in one-letter code: Acetyl-coenzyme A carboxylase carboxyl transferase subunit beta (288 aa).

One can recognise a CoA carboxyltransferase N-terminal domain in the interval 24 to 288 (LWVKCPESGE…TRTPRASEAA (265 aa)).

It belongs to the AccD/PCCB family. Acetyl-CoA carboxylase is a heterohexamer composed of biotin carboxyl carrier protein (AccB), biotin carboxylase (AccC) and two subunits each of ACCase subunit alpha (AccA) and ACCase subunit beta (AccD).

It is found in the cytoplasm. The enzyme catalyses N(6)-carboxybiotinyl-L-lysyl-[protein] + acetyl-CoA = N(6)-biotinyl-L-lysyl-[protein] + malonyl-CoA. Its pathway is lipid metabolism; malonyl-CoA biosynthesis; malonyl-CoA from acetyl-CoA: step 1/1. Its function is as follows. Component of the acetyl coenzyme A carboxylase (ACC) complex. Biotin carboxylase (BC) catalyzes the carboxylation of biotin on its carrier protein (BCCP) and then the CO(2) group is transferred by the transcarboxylase to acetyl-CoA to form malonyl-CoA. The chain is Acetyl-coenzyme A carboxylase carboxyl transferase subunit beta from Methylocella silvestris (strain DSM 15510 / CIP 108128 / LMG 27833 / NCIMB 13906 / BL2).